Here is a 366-residue protein sequence, read N- to C-terminus: Molybdopterin synthase catalytic subunit (366 aa).

Residues 101 to 102, Lys117, and 124 to 126 contribute to the substrate site; these read HR and KKE.

The protein belongs to the MoaE family. MOCS2B subfamily. In terms of assembly, heterotetramer; composed of 2 small (Mocs2A) and 2 large (Mocs2B) subunits.

Its subcellular location is the cytoplasm. The catalysed reaction is 2 [molybdopterin-synthase sulfur-carrier protein]-C-terminal-Gly-aminoethanethioate + cyclic pyranopterin phosphate + H2O = molybdopterin + 2 [molybdopterin-synthase sulfur-carrier protein]-C-terminal Gly-Gly + 2 H(+). It functions in the pathway cofactor biosynthesis; molybdopterin biosynthesis. Its function is as follows. Catalytic subunit of the molybdopterin synthase complex, a complex that catalyzes the conversion of precursor Z into molybdopterin. Acts by mediating the incorporation of 2 sulfur atoms from thiocarboxylated Mocs2A into precursor Z to generate a dithiolene group. In Drosophila mojavensis (Fruit fly), this protein is Molybdopterin synthase catalytic subunit.